A 177-amino-acid polypeptide reads, in one-letter code: MSRVGKAPIALPKGAEVNVAAGVLSVKGPLGTLSQPIHSLVKVNVENDTLTFAPADESREANALQGTMRALAANMVKGVTTGFERKLNLVGVGYRAQLQGTALKLQLGFSHDVIHEMPEGVKAETPTQTEILIKGADKQKVGQVAAEVRAYRPPEPYKGKGVRYSDERVILKETKKK.

Belongs to the universal ribosomal protein uL6 family. In terms of assembly, part of the 50S ribosomal subunit.

Functionally, this protein binds to the 23S rRNA, and is important in its secondary structure. It is located near the subunit interface in the base of the L7/L12 stalk, and near the tRNA binding site of the peptidyltransferase center. The protein is Large ribosomal subunit protein uL6 of Cupriavidus taiwanensis (strain DSM 17343 / BCRC 17206 / CCUG 44338 / CIP 107171 / LMG 19424 / R1) (Ralstonia taiwanensis (strain LMG 19424)).